A 201-amino-acid polypeptide reads, in one-letter code: MAKASFILLGTLFLFGAIASIQAKEDLKEVTHKVYFDVEIDGKSAGRVVIGLFGKAVPKTAENFRALCTGEKGVGKSGKPLHYKGSKFHRIIPSFMIQGGDFTHGNGMGGESIYGQKFADENFKLKHTGPGVLSMANSGEDTNGSQFFITTVTTSWLDGRHVVFGKVVQGMDVVYKIEAEGKQSGTPKSKVVIADSGELPL.

A signal peptide spans M1–A23. In terms of domain architecture, PPIase cyclophilin-type spans Y35 to E198.

The protein belongs to the cyclophilin-type PPIase family. Interacts with EMB30/GNOM. Ubiquitous, mostly in aerial organs (at protein level).

It localises to the cytoplasm. Its subcellular location is the membrane. The protein localises to the endoplasmic reticulum. It is found in the secreted. It carries out the reaction [protein]-peptidylproline (omega=180) = [protein]-peptidylproline (omega=0). With respect to regulation, binds cyclosporin A (CsA). CsA mediates some of its effects via an inhibitory action on PPIase. Functionally, PPIases accelerate the folding of proteins. It catalyzes the cis-trans isomerization of proline imidic peptide bonds in oligopeptides. May be involved during embryogenesis and organ development by regulating the folding of EMB30/GNOM, and thus, by modulating its activity. This chain is Peptidyl-prolyl cis-trans isomerase CYP19-4 (CYP19-4), found in Arabidopsis thaliana (Mouse-ear cress).